The chain runs to 278 residues: Bifunctional protein FolD (278 aa).

NADP(+) is bound by residues 164-166 and Thr228; that span reads GRS.

The protein belongs to the tetrahydrofolate dehydrogenase/cyclohydrolase family. In terms of assembly, homodimer.

It carries out the reaction (6R)-5,10-methylene-5,6,7,8-tetrahydrofolate + NADP(+) = (6R)-5,10-methenyltetrahydrofolate + NADPH. The enzyme catalyses (6R)-5,10-methenyltetrahydrofolate + H2O = (6R)-10-formyltetrahydrofolate + H(+). It functions in the pathway one-carbon metabolism; tetrahydrofolate interconversion. Its function is as follows. Catalyzes the oxidation of 5,10-methylenetetrahydrofolate to 5,10-methenyltetrahydrofolate and then the hydrolysis of 5,10-methenyltetrahydrofolate to 10-formyltetrahydrofolate. In Mycoplasmopsis synoviae (strain 53) (Mycoplasma synoviae), this protein is Bifunctional protein FolD.